The sequence spans 909 residues: Protein translocase subunit SecA (909 aa).

Residues Gln-87, 105–109 (GEGKT), and Asp-512 contribute to the ATP site. The disordered stretch occupies residues 863-909 (LVGGGDEDDESIAAHTPMIRDGDKVGRNDPCPCGSGRKYKQCHGKLS). A compositionally biased stretch (basic and acidic residues) spans 880–889 (MIRDGDKVGR). Zn(2+) is bound by residues Cys-893, Cys-895, Cys-904, and His-905. A compositionally biased stretch (basic residues) spans 899 to 909 (RKYKQCHGKLS).

It belongs to the SecA family. Monomer and homodimer. Part of the essential Sec protein translocation apparatus which comprises SecA, SecYEG and auxiliary proteins SecDF-YajC and YidC. It depends on Zn(2+) as a cofactor.

Its subcellular location is the cell inner membrane. It is found in the cytoplasm. It carries out the reaction ATP + H2O + cellular proteinSide 1 = ADP + phosphate + cellular proteinSide 2.. Its function is as follows. Part of the Sec protein translocase complex. Interacts with the SecYEG preprotein conducting channel. Has a central role in coupling the hydrolysis of ATP to the transfer of proteins into and across the cell membrane, serving both as a receptor for the preprotein-SecB complex and as an ATP-driven molecular motor driving the stepwise translocation of polypeptide chains across the membrane. This Shewanella putrefaciens (strain CN-32 / ATCC BAA-453) protein is Protein translocase subunit SecA.